A 643-amino-acid polypeptide reads, in one-letter code: 1-deoxy-D-xylulose-5-phosphate synthase (643 aa).

Thiamine diphosphate is bound by residues H71 and S112 to A114. D144 is a Mg(2+) binding site. Thiamine diphosphate-binding positions include G145–A146, N173, Y284, and E365. N173 lines the Mg(2+) pocket.

Belongs to the transketolase family. DXPS subfamily. Homodimer. The cofactor is Mg(2+). It depends on thiamine diphosphate as a cofactor.

It catalyses the reaction D-glyceraldehyde 3-phosphate + pyruvate + H(+) = 1-deoxy-D-xylulose 5-phosphate + CO2. Its pathway is metabolic intermediate biosynthesis; 1-deoxy-D-xylulose 5-phosphate biosynthesis; 1-deoxy-D-xylulose 5-phosphate from D-glyceraldehyde 3-phosphate and pyruvate: step 1/1. Functionally, catalyzes the acyloin condensation reaction between C atoms 2 and 3 of pyruvate and glyceraldehyde 3-phosphate to yield 1-deoxy-D-xylulose-5-phosphate (DXP). The protein is 1-deoxy-D-xylulose-5-phosphate synthase of Mycobacterium leprae (strain Br4923).